Reading from the N-terminus, the 430-residue chain is Chaperone SurA (430 aa).

Residues 1–25 (MQIIKTTIATFTAIAFTGAASFTSA) form the signal peptide. 2 consecutive PpiC domains span residues 176-277 (SPDY…KLYE) and 286-385 (VNQT…KVEE).

It is found in the periplasm. It catalyses the reaction [protein]-peptidylproline (omega=180) = [protein]-peptidylproline (omega=0). In terms of biological role, chaperone involved in the correct folding and assembly of outer membrane proteins. Recognizes specific patterns of aromatic residues and the orientation of their side chains, which are found more frequently in integral outer membrane proteins. May act in both early periplasmic and late outer membrane-associated steps of protein maturation. The chain is Chaperone SurA from Saccharophagus degradans (strain 2-40 / ATCC 43961 / DSM 17024).